The following is a 269-amino-acid chain: 3-deoxy-manno-octulosonate cytidylyltransferase (269 aa).

It belongs to the KdsB family.

The protein localises to the cytoplasm. The catalysed reaction is 3-deoxy-alpha-D-manno-oct-2-ulosonate + CTP = CMP-3-deoxy-beta-D-manno-octulosonate + diphosphate. The protein operates within nucleotide-sugar biosynthesis; CMP-3-deoxy-D-manno-octulosonate biosynthesis; CMP-3-deoxy-D-manno-octulosonate from 3-deoxy-D-manno-octulosonate and CTP: step 1/1. It participates in bacterial outer membrane biogenesis; lipopolysaccharide biosynthesis. Its function is as follows. Activates KDO (a required 8-carbon sugar) for incorporation into bacterial lipopolysaccharide in Gram-negative bacteria. The sequence is that of 3-deoxy-manno-octulosonate cytidylyltransferase from Cupriavidus necator (strain ATCC 17699 / DSM 428 / KCTC 22496 / NCIMB 10442 / H16 / Stanier 337) (Ralstonia eutropha).